The sequence spans 159 residues: Large ribosomal subunit protein bL35c (159 aa).

Residues 1–86 (MAMASATATL…TSSPSFTVFA (86 aa)) constitute a chloroplast transit peptide.

Component of the chloroplast large ribosomal subunit (LSU). Mature 70S chloroplast ribosomes of higher plants consist of a small (30S) and a large (50S) subunit. The 30S small subunit contains 1 molecule of ribosomal RNA (16S rRNA) and 24 different proteins. The 50S large subunit contains 3 rRNA molecules (23S, 5S and 4.5S rRNA) and 33 different proteins.

The protein localises to the plastid. It is found in the chloroplast. Functionally, component of the chloroplast ribosome (chloro-ribosome), a dedicated translation machinery responsible for the synthesis of chloroplast genome-encoded proteins, including proteins of the transcription and translation machinery and components of the photosynthetic apparatus. In Spinacia oleracea (Spinach), this protein is Large ribosomal subunit protein bL35c (RPL35).